Here is a 268-residue protein sequence, read N- to C-terminus: MALTWTHKDRGEIRVHENLEELSIDLVDYIAEISEASIKEHGAFCIVLSGGSLISFMGKLIEPPYDKIVDWAKWYVFWADERVVAKNHDDSNYKLAKDNLLSKVNVFPRHICSINDTVSAEEAATEYEFAIRQMVRSRTVAASDNSDSPRFDLILLGMGSDGHVASLFPNHPALEVKDDWVTFLTDSHKPPPERITFTLPVINSAANVVVVATGESKANAIHLAIDDLPLPDSSLSLPARLVHPSNGNLIWFMDKQAGSKLDRFKFSE.

This sequence belongs to the glucosamine/galactosamine-6-phosphate isomerase family. 6-phosphogluconolactonase subfamily.

The protein localises to the cytoplasm. Its subcellular location is the cytosol. It catalyses the reaction 6-phospho-D-glucono-1,5-lactone + H2O = 6-phospho-D-gluconate + H(+). It participates in carbohydrate degradation; pentose phosphate pathway; D-ribulose 5-phosphate from D-glucose 6-phosphate (oxidative stage): step 2/3. Catalyzes the hydrolysis of 6-phosphogluconolactone to 6-phosphogluconate. The protein is Probable 6-phosphogluconolactonase 1 of Arabidopsis thaliana (Mouse-ear cress).